We begin with the raw amino-acid sequence, 370 residues long: Glutamate 5-kinase (370 aa).

Lys17 provides a ligand contact to ATP. The substrate site is built by Ser57, Asp144, and Asn156. ATP contacts are provided by residues 176–177 (SD) and 220–226 (TGGMVSK). The PUA domain occupies 282–360 (SGTLTLDDGA…SDLPAEMRRP (79 aa)).

This sequence belongs to the glutamate 5-kinase family.

Its subcellular location is the cytoplasm. It carries out the reaction L-glutamate + ATP = L-glutamyl 5-phosphate + ADP. Its pathway is amino-acid biosynthesis; L-proline biosynthesis; L-glutamate 5-semialdehyde from L-glutamate: step 1/2. Catalyzes the transfer of a phosphate group to glutamate to form L-glutamate 5-phosphate. This chain is Glutamate 5-kinase, found in Mycolicibacterium gilvum (strain PYR-GCK) (Mycobacterium gilvum (strain PYR-GCK)).